The following is a 265-amino-acid chain: Seminal vesicle secretory protein 3A (265 aa).

A signal peptide spans 1 to 20 (MKSIFFSLSLLLLLEKKAAG). A run of 5 repeats spans residues 116–119 (QIKS), 122–125 (QVKS), 129–132 (QLKS), 136–139 (QLKT), and 142–145 (QVKS). A 5 X 4 AA tandem repeats of Q-X-K-[ST] region spans residues 116–145 (QIKSQTQVKSYAAQLKSQPGQLKTIGQVKS).

In terms of processing, glycosylated. Covalently cross-linked by transglutaminase, which is important for the formation of the gelatinous copulatory plug. Five repeats of Q-X-K-(S/T) in the central region of the protein serve as the transglutaminase substrate site(s). Highly expressed in the seminal vesicle where it is detected in luminal epithelium of the mucosa folds, and also in luminal fluid (at protein level). Not detected in other tissues tested.

The protein localises to the secreted. Functionally, component of the copulatory plug. This Mus musculus (Mouse) protein is Seminal vesicle secretory protein 3A.